The sequence spans 499 residues: Maturase K (499 aa).

This sequence belongs to the intron maturase 2 family. MatK subfamily.

It is found in the plastid. Its subcellular location is the chloroplast. Its function is as follows. Usually encoded in the trnK tRNA gene intron. Probably assists in splicing its own and other chloroplast group II introns. This Ceratozamia mexicana (Mexican horncone) protein is Maturase K.